The primary structure comprises 77 residues: Subtilisin-chymotrypsin inhibitor CI-1C (77 aa).

This sequence belongs to the protease inhibitor I13 (potato type I serine protease inhibitor) family.

Its function is as follows. Inhibits both subtilisin and chymotrypsin. This Hordeum vulgare (Barley) protein is Subtilisin-chymotrypsin inhibitor CI-1C.